We begin with the raw amino-acid sequence, 1162 residues long: Nucleoporin nup132 (1162 aa).

The protein belongs to the nucleoporin Nup133 family. In terms of assembly, component of the npc107-120 complex which consists of nup85, nup107, nup120, nup131, nup132 and seh1. Interacts with nup107.

It localises to the nucleus envelope. Functionally, functions as a component of the nuclear pore complex (NPC). NPC components, collectively referred to as nucleoporins (NUPs), can play the role of both NPC structural components and of docking or interaction partners for transiently associated nuclear transport factors. Active directional transport is assured by both, a Phe-Gly (FG) repeat affinity gradient for these transport factors across the NPC and a transport cofactor concentration gradient across the nuclear envelope. This is Nucleoporin nup132 (nup132) from Schizosaccharomyces pombe (strain 972 / ATCC 24843) (Fission yeast).